The following is a 43-amino-acid chain: Potassium channel toxin gamma-KTx 4.3 (43 aa).

Intrachain disulfides connect C5–C23, C11–C34, C20–C39, and C24–C41.

The protein belongs to the ergtoxin family. Gamma-KTx 4 subfamily. Expressed by the venom gland.

It localises to the secreted. In terms of biological role, reversibly blocks Kv11/ERG potassium channels. The polypeptide is Potassium channel toxin gamma-KTx 4.3 (Centruroides exilicauda (Bark scorpion)).